The primary structure comprises 2120 residues: Separin (2120 aa).

Ser-1126 is modified (phosphoserine). A disordered region spans residues 1299–1355 (IKSVPGSEPSKTQGQKRSGRGRQKLASAPLRLNNTSQKGLEGRGLPCTPKPPDRIRQ). Residues Ser-1396 and Ser-1399 each carry the phosphoserine modification. Disordered stretches follow at residues 1412-1485 (AEEP…PEIM) and 1507-1561 (GSDG…PRLR). 2 stretches are compositionally biased toward basic residues: residues 1418 to 1432 (RGTASRGRGRARKGL) and 1454 to 1463 (RSRRAKKVAS). A compositionally biased stretch (basic and acidic residues) spans 1464 to 1473 (RHCEERRPQR). Ser-1508 bears the Phosphoserine mark. Positions 1548–1558 (PDKESDKDLGP) are enriched in basic and acidic residues. The Peptidase C50 domain occupies 1945–2040 (PRSTFYVLNP…SAALAVRGNL (96 aa)). Cys-2029 is an active-site residue.

As to quaternary structure, interacts with PTTG1. Interacts with RAD21. Post-translationally, autocleaves. This function, which is not essential for its protease activity, is unknown. Phosphorylated by CDK1. There are 8 Ser/Thr phosphorylation sites. Among them, Ser-1126 phosphorylation is the major site, which conducts to the enzyme inactivation.

It is found in the cytoplasm. The protein resides in the nucleus. The catalysed reaction is All bonds known to be hydrolyzed by this endopeptidase have arginine in P1 and an acidic residue in P4. P6 is often occupied by an acidic residue or by a hydroxy-amino-acid residue, the phosphorylation of which enhances cleavage.. Its activity is regulated as follows. Regulated by at least two independent mechanisms. First, it is inactivated via its interaction with securin/PTTG1, which probably covers its active site. The association with PTTG1 is not only inhibitory, since PTTG1 is also required for activating it, the enzyme being inactive in cells in which PTTG1 is absent. PTTG1 degradation at anaphase, liberates it and triggers RAD21 cleavage. Second, phosphorylation at Ser-1126 inactivates it. The complete phosphorylation during mitosis, is removed when cells undergo anaphase. Activation of the enzyme at the metaphase-anaphase transition probably requires the removal of both securin and inhibitory phosphate. Functionally, caspase-like protease, which plays a central role in the chromosome segregation by cleaving the SCC1/RAD21 subunit of the cohesin complex at the onset of anaphase. During most of the cell cycle, it is inactivated by different mechanisms. The protein is Separin (ESPL1) of Homo sapiens (Human).